We begin with the raw amino-acid sequence, 563 residues long: MANLNDSAVTNGTLHNPKTQQGKRQSTGCVKNGISKEAQQNRKAYAEDKPVFEPYQEAPLYVYVLTYMGYGIGILFGYLRDFMRNWGIEKCNAAVEREEQKDFVPLYQDFENFYKRNLYMRIRDSWSHTVCSAPEPYMNVMEKVTDDYNWTFRHTGKVIENIINMASYNYLGLAGKYDDSMVRVKDTLEKYGVGVASTRNEMGTLDIHKELEDLMAEFLNVEAVMSFGMGFATNAMNIPVFVGKGCLILSDEFNHTSVILGSRLSGAVIRPFKHNNAENLEKLLREAIIRGQPGTGRAWKKILIVVEGVYSMEGSIVNLAQIVALKKKYKAYLYIDEAHSIGCTGPTGRGVRELFGLDPEDIDVYMGTFTKSFSGSGGYIGGKKEIVDYLRMQSHSTTYATSMSPVVAAQLIRSLKITMGYEGNIGGMERIQQLKENIKYFRRRLKEMGFIIYGNDFSPVIPVLLYMPAKVSAFSRFLLKKKISVVVVGFPATSLPEGRARFSMSSAHTREMLDTVLEVVDELGDLLNVKYFPLKKSGRAILYNKEGFDNEASFEEMHSEPEA.

The span at 1-29 (MANLNDSAVTNGTLHNPKTQQGKRQSTGC) shows a compositional bias: polar residues. Residues 1-32 (MANLNDSAVTNGTLHNPKTQQGKRQSTGCVKN) are disordered. A helical membrane pass occupies residues 59–79 (PLYVYVLTYMGYGIGILFGYL). Lys-371 bears the N6-(pyridoxal phosphate)lysine mark.

It belongs to the class-II pyridoxal-phosphate-dependent aminotransferase family. Component of the serine palmitoyltransferase (SPT) complex, which is composed of SPTLC1, SPTLC2 or SPTLC3 and SPTSSA or SPTSSB. The heterodimer consisting of SPTLC1 and SPTLC2/SPTLC3 forms the catalytic core of the enzyme, while SPTSSA or SPTSSB subunits determine substrate specificity. SPT also interacts with ORMDL proteins, especially ORMDL3, which negatively regulate SPT activity in the presence of ceramides. Pyridoxal 5'-phosphate is required as a cofactor. Expressed in white and brown adipose tissues.

Its subcellular location is the endoplasmic reticulum membrane. It carries out the reaction L-serine + hexadecanoyl-CoA + H(+) = 3-oxosphinganine + CO2 + CoA. The enzyme catalyses dodecanoyl-CoA + L-serine + H(+) = 3-oxotetradecasphinganine + CO2 + CoA. It catalyses the reaction tetradecanoyl-CoA + L-serine + H(+) = 3-oxohexadecasphinganine + CO2 + CoA. The catalysed reaction is octadecanoyl-CoA + L-serine + H(+) = 3-oxoeicosasphinganine + CO2 + CoA. The protein operates within lipid metabolism; sphingolipid metabolism. SPT complex catalytic activity is negatively regulated by ORMDL proteins, including ORMDL3, in the presence of ceramides. This mechanism allows to maintain ceramide levels at sufficient concentrations for the production of complex sphingolipids, but which prevents the accumulation of ceramides to levels that trigger apoptosis. Its function is as follows. Component of the serine palmitoyltransferase multisubunit enzyme (SPT) that catalyzes the initial and rate-limiting step in sphingolipid biosynthesis by condensing L-serine and activated acyl-CoA (most commonly palmitoyl-CoA) to form long-chain bases. The SPT complex is composed of SPTLC1, SPTLC2 or SPTLC3 and SPTSSA or SPTSSB. Within this complex, the heterodimer consisting of SPTLC1 and SPTLC2/SPTLC3 forms the catalytic core. The composition of the serine palmitoyltransferase (SPT) complex determines the substrate preference. The SPTLC1-SPTLC2-SPTSSA complex shows a strong preference for C16-CoA substrate, while the SPTLC1-SPTLC3-SPTSSA isozyme uses both C14-CoA and C16-CoA as substrates, with a slight preference for C14-CoA. The SPTLC1-SPTLC2-SPTSSB complex shows a strong preference for C18-CoA substrate, while the SPTLC1-SPTLC3-SPTSSB isozyme displays an ability to use a broader range of acyl-CoAs, without apparent preference. The polypeptide is Serine palmitoyltransferase 3 (Mus musculus (Mouse)).